The chain runs to 115 residues: Large ribosomal subunit protein bL19 (115 aa).

It belongs to the bacterial ribosomal protein bL19 family.

This protein is located at the 30S-50S ribosomal subunit interface and may play a role in the structure and function of the aminoacyl-tRNA binding site. The polypeptide is Large ribosomal subunit protein bL19 (Akkermansia muciniphila (strain ATCC BAA-835 / DSM 22959 / JCM 33894 / BCRC 81048 / CCUG 64013 / CIP 107961 / Muc)).